Consider the following 228-residue polypeptide: MVSFSYLLLACSAIGALAAPVEPETTSFNETALHEFAERAGTPSSTGWNNGYYYSFWTDGGGDVTYTNGAGGSYSVNWRNVGNFVGGKGWNPGSARTINYGGSFNPSGNGYLAVYGWTTNPLIEYYVVESYGTYNPGSGGTFRGTVNTDGGTYNIYTAVRYNAPSIEGTKTFTQYWSVRTSKRTGGTVTMANHFNAWSRLGMNLGTHNYQIVATEGYQSSGSASITVY.

An N-terminal signal peptide occupies residues 1–18 (MVSFSYLLLACSAIGALA). Residue N29 is glycosylated (N-linked (GlcNAc...) asparagine). Positions 40 to 228 (AGTPSSTGWN…SSGSASITVY (189 aa)) constitute a GH11 domain. E124 acts as the Nucleophile in catalysis. Residue E215 is the Proton donor of the active site.

This sequence belongs to the glycosyl hydrolase 11 (cellulase G) family.

The protein resides in the secreted. The enzyme catalyses Endohydrolysis of (1-&gt;4)-beta-D-xylosidic linkages in xylans.. The protein operates within glycan degradation; xylan degradation. In terms of biological role, endo-1,4-beta-xylanase involved in the hydrolysis of xylan, a major structural heterogeneous polysaccharide found in plant biomass representing the second most abundant polysaccharide in the biosphere, after cellulose. The protein is Probable endo-1,4-beta-xylanase A (xlnA) of Aspergillus fumigatus (strain CBS 144.89 / FGSC A1163 / CEA10) (Neosartorya fumigata).